A 97-amino-acid polypeptide reads, in one-letter code: M-zodatoxin-Lt7a (97 aa).

An N-terminal signal peptide occupies residues 1–22 (MKFYVVALALLVAFVCIAESRS). A propeptide spanning residues 23 to 63 (VETERAVDADLEDDLDDLEEYLEGIAEALELEDFPDTEEAR) is cleaved from the precursor. Residues 60–63 (EEAR) carry the Processing quadruplet motif motif.

Post-translationally, cleavage of the propeptide depends on the processing quadruplet motif (XXXR, with at least one of X being E). Expressed by the venom gland.

It localises to the secreted. Does not have antimicrobial or antifungal activity. Does not have hemolytic activity against rabbit erythrocytes. However, it causes some conductance changes in planar bilayer membranes, without membrane rupture, suggesting a cytolytic function on other biological targets. It causes paralysis, but is not lethal when injected into insect (M.domestica) larvae. This is M-zodatoxin-Lt7a from Lachesana tarabaevi (Spider).